The sequence spans 154 residues: 6,7-dimethyl-8-ribityllumazine synthase (154 aa).

5-amino-6-(D-ribitylamino)uracil-binding positions include Phe-22, 57–59 (AYE), and 81–83 (AVI). 86 to 87 (GT) is a binding site for (2S)-2-hydroxy-3-oxobutyl phosphate. The active-site Proton donor is the His-89. Phe-114 is a 5-amino-6-(D-ribitylamino)uracil binding site. Arg-128 is a binding site for (2S)-2-hydroxy-3-oxobutyl phosphate.

The protein belongs to the DMRL synthase family. Forms an icosahedral capsid composed of 60 subunits, arranged as a dodecamer of pentamers.

The catalysed reaction is (2S)-2-hydroxy-3-oxobutyl phosphate + 5-amino-6-(D-ribitylamino)uracil = 6,7-dimethyl-8-(1-D-ribityl)lumazine + phosphate + 2 H2O + H(+). Its pathway is cofactor biosynthesis; riboflavin biosynthesis; riboflavin from 2-hydroxy-3-oxobutyl phosphate and 5-amino-6-(D-ribitylamino)uracil: step 1/2. Its function is as follows. Catalyzes the formation of 6,7-dimethyl-8-ribityllumazine by condensation of 5-amino-6-(D-ribitylamino)uracil with 3,4-dihydroxy-2-butanone 4-phosphate. This is the penultimate step in the biosynthesis of riboflavin. The polypeptide is 6,7-dimethyl-8-ribityllumazine synthase (Idiomarina loihiensis (strain ATCC BAA-735 / DSM 15497 / L2-TR)).